Consider the following 386-residue polypeptide: Methionyl-tRNA formyltransferase, mitochondrial (386 aa).

This sequence belongs to the Fmt family.

Its subcellular location is the mitochondrion. It carries out the reaction L-methionyl-tRNA(fMet) + (6R)-10-formyltetrahydrofolate = N-formyl-L-methionyl-tRNA(fMet) + (6S)-5,6,7,8-tetrahydrofolate + H(+). Methionyl-tRNA formyltransferase that formylates methionyl-tRNA in mitochondria and is crucial for translation initiation. This chain is Methionyl-tRNA formyltransferase, mitochondrial (Mtfmt), found in Mus musculus (Mouse).